Reading from the N-terminus, the 575-residue chain is MSAQGEGGGAGGSGGGGAGSDGGGNAGQSSTGSGTVAVTNGGNSSAKNQLPLTPRFTAEEKEVLYTLFHLHEEVIDIKHRKKQRNKYSVRETWDKIVKDFNSHPHVSAMRNIKQIQKFWLNSRLRKQYPYRDGSSSNLSSGSAKISSVSVSVASAVPQQQQQQHHQQHDSVKVEPEYQISPDASEHNPQADTFDEIEMDANDVSEIDEDPMEQQQQQQQEAQAQAQAQAQAQAQVQSAAAEMQKMQQVNAVAAAAAANATMINTHQINVDQISAEKLTLNDLLHFKTARPREEIILIKHPEATATQIHTIPTQAQQHPMATITAGGYNQQIISEIKPQQITLAQYQAQQQQQAQAQAQAQAQAQAQAQAQAQAQAQAQQLAQQQLAAAQHQQLAAAVQVHHQQQQQQQAAVAVQQQQAAAAAAVKMQLTAATPTFTFSALPTVTAATTVPAAVPVPVATASSGSANSVAVNTSTASSVSINNTSLGGGGGNGATNSSATAADSFEERMNYFKIREAELRCKEQQLATEAKRIELNKAQDELKYMKEVHRLRVEELTMKIRILQKEEEQLRKCSTS.

Residues 1–26 (MSAQGEGGGAGGSGGGGAGSDGGGNA) are compositionally biased toward gly residues. Disordered regions lie at residues 1–53 (MSAQ…LPLT) and 151–174 (SVASAVPQQQQQQHHQQHDSVKVE). A hydrophobic region spans residues 2-47 (SAQGEGGGAGGSGGGGAGSDGGGNAGQSSTGSGTVAVTNGGNSSAK). Residues 31 to 51 (TGSGTVAVTNGGNSSAKNQLP) show a composition bias toward polar residues. The DNA-binding element occupies 48 to 128 (NQLPLTPRFT…WLNSRLRKQY (81 aa)). The span at 151–164 (SVASAVPQQQQQQH) shows a compositional bias: low complexity.

As to quaternary structure, self-associates forming complexes of several hundred monomers.

It localises to the nucleus. In terms of biological role, involved in transvection phenomena (= synapsis-dependent gene expression), where the synaptic pairing of chromosomes carrying genes with which zeste interacts influences the expression of these genes. Zeste binds to DNA and stimulates transcription from a nearby promoter. This is Regulatory protein zeste (z) from Drosophila melanogaster (Fruit fly).